The sequence spans 533 residues: Zinc finger protein 26 (533 aa).

In terms of domain architecture, KRAB spans 14–85; it reads LSFKDISMEF…NAKISRQSCP (72 aa). 13 C2H2-type zinc fingers span residues 174-196, 202-224, 230-252, 258-280, 286-308, 314-336, 342-364, 370-392, 398-420, 426-448, 454-476, 482-504, and 510-532; these read CVCS…LRIH, YECS…QRVH, YSCS…QEIH, YGCS…QRSH, YECS…QRTH, HKCS…IRMH, YQCS…QGVH, YQCG…LRAH, YGCS…RRTH, YECN…QKTH, FKCS…QRVH, and WKCS…RKTH.

Belongs to the krueppel C2H2-type zinc-finger protein family.

It is found in the nucleus. Functionally, may be involved in transcriptional regulation. The chain is Zinc finger protein 26 (ZNF26) from Homo sapiens (Human).